Consider the following 327-residue polypeptide: 7,8-didemethyl-8-hydroxy-5-deazariboflavin synthase (327 aa).

One can recognise a Radical SAM core domain in the interval 6–244 (ITFSRNVFLP…EEVAVQVAPN (239 aa)). Positions 20, 24, and 27 each coordinate [4Fe-4S] cluster.

This sequence belongs to the radical SAM superfamily. CofG family. Consists of two subunits, CofG and CofH. Requires [4Fe-4S] cluster as cofactor.

It catalyses the reaction 5-amino-5-(4-hydroxybenzyl)-6-(D-ribitylimino)-5,6-dihydrouracil + S-adenosyl-L-methionine = 7,8-didemethyl-8-hydroxy-5-deazariboflavin + 5'-deoxyadenosine + L-methionine + NH4(+) + H(+). The protein operates within cofactor biosynthesis; coenzyme F0 biosynthesis. Its function is as follows. Catalyzes the radical-mediated synthesis of 7,8-didemethyl-8-hydroxy-5-deazariboflavin from 5-amino-5-(4-hydroxybenzyl)-6-(D-ribitylimino)-5,6-dihydrouracil. This chain is 7,8-didemethyl-8-hydroxy-5-deazariboflavin synthase, found in Methanosphaerula palustris (strain ATCC BAA-1556 / DSM 19958 / E1-9c).